A 247-amino-acid chain; its full sequence is Small ribosomal subunit protein uS2 (247 aa).

The protein belongs to the universal ribosomal protein uS2 family.

In Pseudomonas syringae pv. tomato (strain ATCC BAA-871 / DC3000), this protein is Small ribosomal subunit protein uS2.